We begin with the raw amino-acid sequence, 101 residues long: Small ribosomal subunit protein uS14A (101 aa).

The tract at residues 29 to 60 is disordered; sequence EIIRSPRSTPEQRTAAQNELAHQPRDASAVRV. A compositionally biased stretch (polar residues) spans 34–45; that stretch reads PRSTPEQRTAAQ.

It belongs to the universal ribosomal protein uS14 family. As to quaternary structure, part of the 30S ribosomal subunit. Contacts proteins S3 and S10.

Its function is as follows. Binds 16S rRNA, required for the assembly of 30S particles and may also be responsible for determining the conformation of the 16S rRNA at the A site. The chain is Small ribosomal subunit protein uS14A from Mycolicibacterium paratuberculosis (strain ATCC BAA-968 / K-10) (Mycobacterium paratuberculosis).